A 208-amino-acid polypeptide reads, in one-letter code: MFAIFTKIKDRVEAFLNEKNIVTDCLNKIEEKTGIKKRYLAYGAAGVTGAFLLLGYGASLICNLIGFVYPAYFSIKAIESPGKEDDTQWLTYWVIYGFFSVGEFFSDIFLHWFPFYYVCKCLFLLWCMAPVSWNGSQVLYRHVVRPFFLKHEAAVDGMVSNISVKAMSAAENVTREVLHTLVRNRTVGPAESEPRSLPSSAHTEPTVD.

The next 3 helical transmembrane spans lie at 49-69, 93-113, and 115-135; these read GAFL…GFVY, WVIY…LHWF, and FYYV…SWNG. Positions 187-208 are disordered; that stretch reads VGPAESEPRSLPSSAHTEPTVD. The span at 197-208 shows a compositional bias: polar residues; it reads LPSSAHTEPTVD.

The protein belongs to the DP1 family.

Its subcellular location is the endoplasmic reticulum membrane. The protein resides in the cytoplasmic vesicle. It localises to the clathrin-coated vesicle membrane. Its function is as follows. Required correct function and survival of retinal photoreceptors. Required for retinal development. In rod photoreceptors, facilitates stability and/or trafficking of guanylate cyclases and is required to maintain endoplasmic reticulum and mitochondrial homeostasis. May play a role in clathrin-coated intracellular vesicle trafficking of proteins from the endoplasmic reticulum to the retinal rod plasma membrane. In Danio rerio (Zebrafish), this protein is Receptor expression-enhancing protein 6.